A 126-amino-acid polypeptide reads, in one-letter code: UPF0102 protein PMT_0624 (126 aa).

It belongs to the UPF0102 family.

This chain is UPF0102 protein PMT_0624, found in Prochlorococcus marinus (strain MIT 9313).